The chain runs to 317 residues: UV DNA damage endonuclease (317 aa).

Belongs to the uve1/UvsE family.

Its function is as follows. Component in a DNA repair pathway. Removal of UV LIGHT damaged nucleotides. Recognizes pyrimidine dimers and cleave a phosphodiester bond immediately 5' to the lesion. This is UV DNA damage endonuclease from Bacillus mycoides (strain KBAB4) (Bacillus weihenstephanensis).